The primary structure comprises 194 residues: Large ribosomal subunit protein bL25 (194 aa).

This sequence belongs to the bacterial ribosomal protein bL25 family. CTC subfamily. In terms of assembly, part of the 50S ribosomal subunit; part of the 5S rRNA/L5/L18/L25 subcomplex. Contacts the 5S rRNA. Binds to the 5S rRNA independently of L5 and L18.

In terms of biological role, this is one of the proteins that binds to the 5S RNA in the ribosome where it forms part of the central protuberance. The polypeptide is Large ribosomal subunit protein bL25 (Neorickettsia sennetsu (strain ATCC VR-367 / Miyayama) (Ehrlichia sennetsu)).